The primary structure comprises 348 residues: Ferredoxin--NADP reductase (348 aa).

Residues Thr25, Glu44, Gln52, Tyr57, Val97, Phe132, Asp298, and Ser339 each coordinate FAD.

Belongs to the ferredoxin--NADP reductase type 2 family. As to quaternary structure, homodimer. It depends on FAD as a cofactor.

The catalysed reaction is 2 reduced [2Fe-2S]-[ferredoxin] + NADP(+) + H(+) = 2 oxidized [2Fe-2S]-[ferredoxin] + NADPH. In Chlorobium phaeobacteroides (strain BS1), this protein is Ferredoxin--NADP reductase.